The following is a 370-amino-acid chain: Natural killer cell receptor 2B4 (370 aa).

The first 21 residues, 1-21, serve as a signal peptide directing secretion; that stretch reads MLGQVVTLILLLLLKVYQGKG. 2 consecutive Ig-like domains span residues 22-127 and 131-215; these read CQGS…FVFE and PDKV…LNLT. Over 22–229 the chain is Extracellular; that stretch reads CQGSADHVVS…NAHQEFRFWP (208 aa). N-linked (GlcNAc...) asparagine glycans are attached at residues Asn-71, Asn-77, Asn-89, Asn-164, Asn-181, Asn-192, Asn-200, and Asn-213. A disulfide bond links Cys-157 and Cys-199. A helical membrane pass occupies residues 230-250; sequence FLVIIVILSALFLGTLACFCV. Residues 251–370 are Cytoplasmic-facing; it reads WRRKRKEKQS…KELENFDVYS (120 aa). 4 short sequence motifs (ITSM) span residues 269–274, 295–300, 315–320, and 340–345; these read TIYEDV, TIYSMI, TLYSLI, and TIYEVI. Position 271 is a phosphotyrosine (Tyr-271). Residue Tyr-297 is modified to Phosphotyrosine; by FYN. The residue at position 317 (Tyr-317) is a Phosphotyrosine. Residues 324 to 370 form a disordered region; the sequence is RKSGSRKRNHSPSFNSTIYEVIGKSQPKAQNPARLSRKELENFDVYS. Phosphotyrosine; by FYN is present on Tyr-342.

Interacts with CD48. Interacts (via phosphorylated ITSM 1-4) with SH2D1A (via SH2 domain); SH2D1A probably mediates association with FYN. Interacts (via phosphorylated ITSM 3) with PTPN11/SHP-2, INPP5D/SHIP1, PTPN6/SHP-1 and CSK; binding of SH2D1A/SAP prevents association with PTPN11, PTPN6 and CSK; conflictingly a similar association has been described for phosphorylated ITSM 1 also including GRB2 and PLCG1. Interacts weakly (via phosphorylated ITSM 2) with PTPN11/SHP-2 and CSK. Interacts with SH2D1B. Interacts with PIK3R1; PI3K recruits SH2D1A. Interacts with MHC class I proteins; the interaction is proposed to prevent self-killing of NK cells. Post-translationally, N-linked glycosylation is essential for the binding to its ligand CD48. Also O-glycosylated, in contrast, O-linked sialylation has a negative impact on ligand binding. Phosphorylated by FYN and CSK on tyrosine residues following activation. Coligation with inhibitory receptors such as KIR2DL1 inhibits phosphorylation upon contact of NK cells with sensitive target cells. Expressed in spleen, PBL, followed by lung, liver, testis and small intestine. Expressed in all natural killer (NK) cells, monocytes and basophils, TCR-gamma/delta+ T-cells, monocytes, basophils, and on a subset of CD8(+) T-cells.

It is found in the membrane. Its subcellular location is the cell membrane. The protein resides in the membrane raft. Its function is as follows. Heterophilic receptor of the signaling lymphocytic activation molecule (SLAM) family; its ligand is CD48. SLAM receptors triggered by homo- or heterotypic cell-cell interactions are modulating the activation and differentiation of a wide variety of immune cells and thus are involved in the regulation and interconnection of both innate and adaptive immune response. Activities are controlled by presence or absence of small cytoplasmic adapter proteins, SH2D1A/SAP and/or SH2D1B/EAT-2. Acts as activating natural killer (NK) cell receptor. Activating function implicates association with SH2D1A and FYN. Downstreaming signaling involves predominantly VAV1, and, to a lesser degree, INPP5D/SHIP1 and CBL. Signal attenuation in the absence of SH2D1A is proposed to be dependent on INPP5D and to a lesser extent PTPN6/SHP-1 and PTPN11/SHP-2. Stimulates NK cell cytotoxicity, production of IFN-gamma and granule exocytosis. Optimal expansion and activation of NK cells seems to be dependent on the engagement of CD244 with CD48 expressed on neighboring NK cells. Acts as costimulator in NK activation by enhancing signals by other NK receptors such as NCR3 and NCR1. At early stages of NK cell differentiation may function as an inhibitory receptor possibly ensuring the self-tolerance of developing NK cells. Involved in the regulation of CD8(+) T-cell proliferation; expression on activated T-cells and binding to CD48 provides costimulatory-like function for neighboring T-cells. Inhibits inflammatory responses in dendritic cells (DCs). This is Natural killer cell receptor 2B4 (CD244) from Homo sapiens (Human).